We begin with the raw amino-acid sequence, 1375 residues long: DNA-directed RNA polymerase subunit beta' (1375 aa).

The tract at residues 1–158 is unknown; sequence MAKNEVLSLP…RVNKIIQPIR (158 aa). The tract at residues 159–1353 is DNA-directed RNA polymerase subunit beta'; it reads KTYGSKAFTH…GGLIPAGTGI (1195 aa). Zn(2+) is bound by residues Cys-219, Cys-221, Cys-233, and Cys-236. Mg(2+)-binding residues include Asp-607, Asp-609, and Asp-611.

This sequence belongs to the RNA polymerase beta' chain family. The RNAP catalytic core consists of 2 alpha, 1 beta, 1 beta' and 1 omega subunit. When a sigma factor is associated with the core the holoenzyme is formed, which can initiate transcription. Mg(2+) is required as a cofactor. Zn(2+) serves as cofactor.

It carries out the reaction RNA(n) + a ribonucleoside 5'-triphosphate = RNA(n+1) + diphosphate. DNA-dependent RNA polymerase catalyzes the transcription of DNA into RNA using the four ribonucleoside triphosphates as substrates. In Acholeplasma laidlawii (strain PG-8A), this protein is DNA-directed RNA polymerase subunit beta'.